The following is a 251-amino-acid chain: Spermatogenesis-associated protein 46 (251 aa).

Its subcellular location is the nucleus membrane. In terms of biological role, plays a role in spermiogenesis and fertilization. The sequence is that of Spermatogenesis-associated protein 46 (SPATA46) from Macaca fascicularis (Crab-eating macaque).